Consider the following 433-residue polypeptide: N-lysine methyltransferase SMYD2 (433 aa).

The SET domain maps to 7 to 241; that stretch reads GGLERFCSPG…PGEEVFTSYI (235 aa). S-adenosyl-L-methionine is bound at residue 17–19; the sequence is KGR. Positions 52, 55, 65, 68, 74, 78, 86, and 90 each coordinate Zn(2+). The MYND-type zinc-finger motif lies at 52 to 90; the sequence is CEYCFTRKEGLSKCGRCKQAFYCNVECQKEDWPMHKLEC. Residues His137, 206 to 207, and 258 to 260 each bind S-adenosyl-L-methionine; these read NH and YFF. Phosphoserine is present on Ser283.

Belongs to the class V-like SAM-binding methyltransferase superfamily. Interacts with RNA polymerase II and HELZ. Interacts with SIN3A and HDAC1. Interacts (via MYND-type zinc finger) with EPB41L3. Interacts (via SET domain) with p53/TP53. Interacts with RB1 and HSP90AA1.

Its subcellular location is the cytoplasm. The protein localises to the cytosol. It localises to the nucleus. It catalyses the reaction L-lysyl(4)-[histone H3] + 3 S-adenosyl-L-methionine = N(6),N(6),N(6)-trimethyl-L-lysyl(4)-[histone H3] + 3 S-adenosyl-L-homocysteine + 3 H(+). The catalysed reaction is L-lysyl-[protein] + S-adenosyl-L-methionine = N(6)-methyl-L-lysyl-[protein] + S-adenosyl-L-homocysteine + H(+). Functionally, protein-lysine N-methyltransferase that methylates both histones and non-histone proteins, including p53/TP53 and RB1. Specifically trimethylates histone H3 'Lys-4' (H3K4me3) in vivo. The activity requires interaction with HSP90alpha. Shows even higher methyltransferase activity on p53/TP53. Monomethylates 'Lys-370' of p53/TP53, leading to decreased DNA-binding activity and subsequent transcriptional regulation activity of p53/TP53. Monomethylates RB1 at 'Lys-860'. This chain is N-lysine methyltransferase SMYD2 (SMYD2), found in Homo sapiens (Human).